The chain runs to 126 residues: Small ribosomal subunit protein uS13 (126 aa).

Residues 99–126 (LRGQSTKNNARTRKGKRKTVANKKRVTK) form a disordered region. A compositionally biased stretch (basic residues) spans 108–126 (ARTRKGKRKTVANKKRVTK).

The protein belongs to the universal ribosomal protein uS13 family. As to quaternary structure, part of the 30S ribosomal subunit. Forms a loose heterodimer with protein S19. Forms two bridges to the 50S subunit in the 70S ribosome.

Its function is as follows. Located at the top of the head of the 30S subunit, it contacts several helices of the 16S rRNA. In the 70S ribosome it contacts the 23S rRNA (bridge B1a) and protein L5 of the 50S subunit (bridge B1b), connecting the 2 subunits; these bridges are implicated in subunit movement. Contacts the tRNAs in the A and P-sites. In Azobacteroides pseudotrichonymphae genomovar. CFP2, this protein is Small ribosomal subunit protein uS13.